The following is a 333-amino-acid chain: Phosphoenolpyruvate transferase (333 aa).

D65 contributes to the 7,8-didemethyl-8-hydroxy-5-deazariboflavin binding site.

The protein belongs to the CofD family. In terms of assembly, homodimer. The cofactor is Mg(2+).

It carries out the reaction enolpyruvoyl-2-diphospho-5'-guanosine + 7,8-didemethyl-8-hydroxy-5-deazariboflavin = dehydro coenzyme F420-0 + GMP + H(+). It participates in cofactor biosynthesis; coenzyme F420 biosynthesis. Catalyzes the transfer of the phosphoenolpyruvate moiety from enoylpyruvoyl-2-diphospho-5'-guanosine (EPPG) to 7,8-didemethyl-8-hydroxy-5-deazariboflavin (FO) with the formation of dehydro coenzyme F420-0 and GMP. The chain is Phosphoenolpyruvate transferase from Mycobacterium leprae (strain TN).